A 125-amino-acid polypeptide reads, in one-letter code: Large ribosomal subunit protein bL12 (125 aa).

Belongs to the bacterial ribosomal protein bL12 family. In terms of assembly, homodimer. Part of the ribosomal stalk of the 50S ribosomal subunit. Forms a multimeric L10(L12)X complex, where L10 forms an elongated spine to which 2 to 4 L12 dimers bind in a sequential fashion. Binds GTP-bound translation factors.

In terms of biological role, forms part of the ribosomal stalk which helps the ribosome interact with GTP-bound translation factors. Is thus essential for accurate translation. The sequence is that of Large ribosomal subunit protein bL12 from Syntrophomonas wolfei subsp. wolfei (strain DSM 2245B / Goettingen).